The sequence spans 611 residues: Histone acetyltransferase KAT7 (611 aa).

Residues 1-173 form a disordered region; sequence MPRRKRNAGS…SDLSHRPKRR (173 aa). S10 is modified (phosphoserine). Over residues 42–57 the composition is skewed to low complexity; it reads VTRSSARLSQSSQDSS. Phosphoserine; by ATR is present on residues S50 and S53. Position 57 is a phosphoserine; by PLK1 (S57). Position 64 is a phosphoserine (S64). Residues T85 and T88 each carry the phosphothreonine; by CDK1 modification. The segment covering 96–105 has biased composition (polar residues); sequence QTRSSGSETE. Residue S102 is modified to Phosphoserine. T104 is subject to Phosphothreonine. Residues 110–125 show a composition bias toward basic and acidic residues; sequence FSDRETKNTADHDESP. Phosphoserine occurs at positions 111 and 124. Residue T128 is modified to Phosphothreonine. A compositionally biased stretch (low complexity) spans 134 to 145; the sequence is PSSESDIDISSP. Positions 148–168 are enriched in basic and acidic residues; sequence SHDESIAKDMSLKDSGSDLSH. 4 positions are modified to phosphoserine: S158, S162, S164, and S178. The segment at 176-219 adopts a CCHHC-type zinc-finger fold; that stretch reads HESYNFNMKCPTPGCNSLGHLTGKHERHFSISGCPLYHNLSADE. K199 and K277 each carry N6-acetyllysine. Residue K323 forms a Glycyl lysine isopeptide (Lys-Gly) (interchain with G-Cter in SUMO2) linkage. Positions 332–607 constitute an MYST-type HAT domain; sequence EGSNMIKTIA…MDPSCLKWTP (276 aa). K338 participates in a covalent cross-link: Glycyl lysine isopeptide (Lys-Gly) (interchain with G-Cter in ubiquitin). The C2HC MYST-type zinc-finger motif lies at 365-390; that stretch reads LYMCEFCLKYMKSQTILRRHMAKCVW. Zn(2+) is bound by residues C368, C371, H384, and C388. An N6-acetyllysine; by autocatalysis modification is found at K432. Acetyl-CoA is bound by residues 475-477 and 483-488; these read ILT and RQGYGK. Position 506 is a phosphoserine (S506). The active-site Proton donor/acceptor is the E508. Acetyl-CoA-binding residues include S512 and S521.

This sequence belongs to the MYST (SAS/MOZ) family. In terms of assembly, component of the HBO1 complex composed of KAT7/HBO1, MEAF6, ING4 or ING5, and one scaffold subunit: complexes containing BRPF scaffold (BRPF1, BRD1/BRPF2 or BRPF3) direct KAT7/HBO1 specificity towards H3K14ac, while complexes containing JADE scaffold (JADE1, JADE2 and JADE3) mediate acetylation of histone H4. Interacts with MCM2 and ORC1. Interacts with the androgen receptor (AR); in the presence of dihydrotestosterone. Interacts with CDT1. Interacts with MAP2K1 and CUL1. Interacts with p53/TP53; leading to inhibit histone acetyltransferase activity. Interacts with MIS18BP1. Phosphorylated at Ser-50 and Ser-53 by ATR in response to DNA damage, promoting its ubiquitination by the CRL4(DDB2) complex and subsequent degradation. Phosphorylation at Ser-50 and Ser-53 by ATR in response to ultraviolet-induced DNA, promotes localization to DNA damage sites. Phosphorylation at Ser-57 by PLK1 during mitosis seems important for prereplicative complex formation and DNA replication licensing, and requires prior phosphorylation at Thr-85 and Thr-88 by CDK1. Phosphorylated by MAP2K1, which accelerates its degradation. In terms of processing, ubiquitinated at Lys-338, leading to proteasomal degradation. Ubiquitinated by the CRL4(DDB2) complex following phosphorylation by ATR, leading to its subsequent degradation. Post-translationally, autoacetylation at Lys-432 is required for proper function. Ubiquitously expressed, with highest levels in testis.

It is found in the nucleus. Its subcellular location is the chromosome. The protein resides in the centromere. The protein localises to the cytoplasm. It localises to the cytosol. It catalyses the reaction L-lysyl-[histone] + acetyl-CoA = N(6)-acetyl-L-lysyl-[histone] + CoA + H(+). Histone acetyltransferase activity is inhibited by GMNN in the context of a complex with CDT1, inhibiting histone H4 acetylation and DNA replication licensing. Selectively inhibited by WM-3835 (N'-(4-fluoro-5-methyl-[1,1'-biphenyl]-3-carbonyl)-3- hydroxybenzenesulfonohydrazide) inhibitor. In terms of biological role, catalytic subunit of histone acetyltransferase HBO1 complexes, which specifically mediate acetylation of histone H3 at 'Lys-14' (H3K14ac), thereby regulating various processes, such as gene transcription, protein ubiquitination, immune regulation, stem cell pluripotent and self-renewal maintenance and embryonic development. Some complexes also catalyze acetylation of histone H4 at 'Lys-5', 'Lys-8' and 'Lys-12' (H4K5ac, H4K8ac and H4K12ac, respectively), regulating DNA replication initiation, regulating DNA replication initiation. Specificity of the HBO1 complexes is determined by the scaffold subunit: complexes containing BRPF scaffold (BRPF1, BRD1/BRPF2 or BRPF3) direct KAT7/HBO1 specificity towards H3K14ac, while complexes containing JADE (JADE1, JADE2 and JADE3) scaffold direct KAT7/HBO1 specificity towards histone H4. H3K14ac promotes transcriptional elongation by facilitating the processivity of RNA polymerase II. Acts as a key regulator of hematopoiesis by forming a complex with BRD1/BRPF2, directing KAT7/HBO1 specificity towards H3K14ac and promoting erythroid differentiation. H3K14ac is also required for T-cell development. KAT7/HBO1-mediated acetylation facilitates two consecutive steps, licensing and activation, in DNA replication initiation: H3K14ac facilitates the activation of replication origins, and histone H4 acetylation (H4K5ac, H4K8ac and H4K12ac) facilitates chromatin loading of MCM complexes, promoting DNA replication licensing. Acts as a positive regulator of centromeric CENPA assembly: recruited to centromeres and mediates histone acetylation, thereby preventing centromere inactivation mediated by SUV39H1, possibly by increasing histone turnover/exchange. Involved in nucleotide excision repair: phosphorylation by ATR in response to ultraviolet irradiation promotes its localization to DNA damage sites, where it mediates histone acetylation to facilitate recruitment of XPC at the damaged DNA sites. Acts as an inhibitor of NF-kappa-B independently of its histone acetyltransferase activity. Plays a central role in the maintenance of leukemia stem cells in acute myeloid leukemia (AML). Acts by mediating acetylation of histone H3 at 'Lys-14' (H3K14ac), thereby facilitating the processivity of RNA polymerase II to maintain the high expression of key genes, such as HOXA9 and HOXA10 that help to sustain the functional properties of leukemia stem cells. The protein is Histone acetyltransferase KAT7 of Homo sapiens (Human).